A 305-amino-acid chain; its full sequence is Ribosomal RNA small subunit methyltransferase H (305 aa).

Residues 30–32 (GGH), D49, F74, D96, and Q103 each bind S-adenosyl-L-methionine.

It belongs to the methyltransferase superfamily. RsmH family.

It is found in the cytoplasm. It catalyses the reaction cytidine(1402) in 16S rRNA + S-adenosyl-L-methionine = N(4)-methylcytidine(1402) in 16S rRNA + S-adenosyl-L-homocysteine + H(+). Specifically methylates the N4 position of cytidine in position 1402 (C1402) of 16S rRNA. The chain is Ribosomal RNA small subunit methyltransferase H from Francisella tularensis subsp. novicida (strain U112).